The primary structure comprises 240 residues: uncharacterized protein (240 aa).

A disordered region spans residues 1–27 (MKDLQKKSSVRRQITNEDDERYGEDSI). 2 positions are modified to phosphoserine: serine 59 and serine 95. Residues 189 to 227 (RTPSPTGKSVGDEATSNNMHSSSAIRNPNGPTVDPEEGK) form a disordered region. A compositionally biased stretch (polar residues) spans 202–218 (ATSNNMHSSSAIRNPNG).

This is an uncharacterized protein from Saccharomyces cerevisiae (strain ATCC 204508 / S288c) (Baker's yeast).